The following is a 460-amino-acid chain: Proton extrusion protein PxcA (460 aa).

Disordered regions lie at residues 82-128 (FSRL…QRRD) and 143-190 (SRYK…GSGN). Residues 90–102 (QNGSGPTSAQDKA) are compositionally biased toward polar residues. A compositionally biased stretch (low complexity) spans 107–120 (AAEANVSESSSENS). Positions 151-163 (KSQPISASISTSP) are enriched in polar residues. Positions 171 to 184 (QPTSTQPSSSNVSV) are enriched in low complexity. 4 consecutive transmembrane segments (helical) span residues 242–262 (FLLL…NFLF), 337–357 (GLKN…LIFV), 373–393 (IYGL…DVFV), and 420–440 (FIYG…KYWI).

Belongs to the CemA family.

It is found in the cell inner membrane. Functionally, required for H(+) efflux immediately after light irradiation to form a rapid H(+) concentration gradient across the thylakoid membranes. Together with PxcL, contributes to transient H(+) uptake following dark to light transition. The protein is Proton extrusion protein PxcA of Synechococcus sp. (strain JA-2-3B'a(2-13)) (Cyanobacteria bacterium Yellowstone B-Prime).